A 1139-amino-acid polypeptide reads, in one-letter code: Solute carrier family 12 member 5 (1139 aa).

Disordered stretches follow at residues M1 to Y63 and T92 to Q116. Residues M1–S98 are Cytoplasmic-facing. The segment covering P19–P45 has biased composition (basic and acidic residues). Residues K46–T55 show a composition bias toward polar residues. Position 57 is a phosphothreonine (T57). Residues S98–K111 are compositionally biased toward basic and acidic residues. The discontinuously helical transmembrane segment at R99–M120 threads the bilayer. K113 provides a ligand contact to K(+). Residues G121 to P129 are Extracellular-facing. A helical transmembrane segment spans residues C130–G151. Over I152–S174 the chain is Cytoplasmic. A helical transmembrane segment spans residues A175 to V203. Residue A184 coordinates chloride. Topologically, residues G204–Y229 are extracellular. 2 helical membrane passes run L230–L250 and N251–N276. Residues K277–L402 are Extracellular-facing. The cysteines at positions 310 and 325 are disulfide-linked. N314, N333, N351, and N362 each carry an N-linked (GlcNAc...) asparagine glycan. C345 and C354 are disulfide-bonded. The helical transmembrane segment at A403–T420 threads the bilayer. Residue M410 participates in K(+) binding. Chloride is bound by residues Y414 and V415. Residues S421–I429 lie on the Cytoplasmic side of the membrane. Residues Y430–S453 traverse the membrane as a helical segment. Position 446 (D446) interacts with K(+). At I454 to L485 the chain is on the extracellular side. Residues R486–G513 traverse the membrane as a helical segment. Residues S514–Q534 lie on the Cytoplasmic side of the membrane. 2 helical membrane-spanning segments follow: residues A535 to G555 and E556 to D578. A chloride-binding site is contributed by E569. Topologically, residues E579 to Y592 are cytoplasmic. 2 helical membrane passes run M593–R615 and Y616–L632. Residues M633–S1139 are Cytoplasmic-facing. The segment at G667–L681 is scissor helix. T929 carries the post-translational modification Phosphothreonine; by OXSR1 and STK39. Residues M942–I1052 are disordered. Residues T945 to G962 show a composition bias toward basic and acidic residues. Positions T982–V994 are enriched in acidic residues. Residues P1003 to P1012 show a composition bias toward low complexity. Positions D1023–K1042 are enriched in basic and acidic residues. T1030 carries the phosphothreonine; by OXSR1 and STK39 modification. Phosphoserine is present on residues S1045, S1048, and S1049.

The protein belongs to the SLC12A transporter family. K/Cl co-transporter subfamily. Homodimer; adopts a domain-swap conformation at the scissor helices connecting the transmembrane domain and C-terminal domain. Heterodimer with K-Cl cotransporters SLC12A6 and SLC12A7. Interacts with AP2A1. Post-translationally, phosphorylated at Thr-929 and Thr-1030 by OXSR1/OSR1 and STK39/SPAK downstream of WNK kinases (WNK1, WNK2, WNK3 or WNK4), inhibiting the potassium-chloride cotransport activity. Brain specific. Detected in neuronal cells.

It is found in the cell membrane. The protein resides in the cell projection. It localises to the dendrite. The catalysed reaction is K(+)(in) + chloride(in) = K(+)(out) + chloride(out). Its activity is regulated as follows. Inhibited following phosphorylation by OXSR1/OSR1 and STK39/SPAK: phosphorylation takes place downstream of WNK kinases (WNK1, WNK2, WNK3 or WNK4) in response to hyperosmotic stress and subsequent cell shrinkage. Its function is as follows. Mediates electroneutral potassium-chloride cotransport in mature neurons and is required for neuronal Cl(-) homeostasis. As major extruder of intracellular chloride, it establishes the low neuronal Cl(-) levels required for chloride influx after binding of GABA-A and glycine to their receptors, with subsequent hyperpolarization and neuronal inhibition. Involved in the regulation of dendritic spine formation and maturation. The protein is Solute carrier family 12 member 5 of Homo sapiens (Human).